Consider the following 257-residue polypeptide: DNA repair protein RecO (257 aa).

This sequence belongs to the RecO family.

In terms of biological role, involved in DNA repair and RecF pathway recombination. This is DNA repair protein RecO from Streptococcus thermophilus (strain CNRZ 1066).